Consider the following 89-residue polypeptide: Small ribosomal subunit protein uS15 (89 aa).

It belongs to the universal ribosomal protein uS15 family. Part of the 30S ribosomal subunit. Forms a bridge to the 50S subunit in the 70S ribosome, contacting the 23S rRNA.

Functionally, one of the primary rRNA binding proteins, it binds directly to 16S rRNA where it helps nucleate assembly of the platform of the 30S subunit by binding and bridging several RNA helices of the 16S rRNA. Its function is as follows. Forms an intersubunit bridge (bridge B4) with the 23S rRNA of the 50S subunit in the ribosome. This Frankia casuarinae (strain DSM 45818 / CECT 9043 / HFP020203 / CcI3) protein is Small ribosomal subunit protein uS15.